The primary structure comprises 62 residues: Small ribosomal subunit protein bS21 (62 aa).

The interval 38-62 (YEKPSERRKRKMNAAVRKNRRTRHG) is disordered.

The protein belongs to the bacterial ribosomal protein bS21 family.

The protein is Small ribosomal subunit protein bS21 of Gemmatimonas aurantiaca (strain DSM 14586 / JCM 11422 / NBRC 100505 / T-27).